A 157-amino-acid chain; its full sequence is SsrA-binding protein (157 aa).

The interval H130 to E157 is disordered. Over residues K132–E157 the composition is skewed to basic and acidic residues.

It belongs to the SmpB family.

It is found in the cytoplasm. Its function is as follows. Required for rescue of stalled ribosomes mediated by trans-translation. Binds to transfer-messenger RNA (tmRNA), required for stable association of tmRNA with ribosomes. tmRNA and SmpB together mimic tRNA shape, replacing the anticodon stem-loop with SmpB. tmRNA is encoded by the ssrA gene; the 2 termini fold to resemble tRNA(Ala) and it encodes a 'tag peptide', a short internal open reading frame. During trans-translation Ala-aminoacylated tmRNA acts like a tRNA, entering the A-site of stalled ribosomes, displacing the stalled mRNA. The ribosome then switches to translate the ORF on the tmRNA; the nascent peptide is terminated with the 'tag peptide' encoded by the tmRNA and targeted for degradation. The ribosome is freed to recommence translation, which seems to be the essential function of trans-translation. This is SsrA-binding protein from Alkaliphilus metalliredigens (strain QYMF).